A 218-amino-acid chain; its full sequence is Molybdenum cofactor guanylyltransferase (218 aa).

GTP-binding positions include 16–18 (LAG), Lys28, Asn56, Asp74, and Asp109. Mg(2+) is bound at residue Asp109.

The protein belongs to the MobA family. In terms of assembly, monomer. The cofactor is Mg(2+).

It localises to the cytoplasm. It carries out the reaction Mo-molybdopterin + GTP + H(+) = Mo-molybdopterin guanine dinucleotide + diphosphate. Transfers a GMP moiety from GTP to Mo-molybdopterin (Mo-MPT) cofactor (Moco or molybdenum cofactor) to form Mo-molybdopterin guanine dinucleotide (Mo-MGD) cofactor. The sequence is that of Molybdenum cofactor guanylyltransferase from Sinorhizobium fredii (strain NBRC 101917 / NGR234).